The chain runs to 286 residues: Aminoglycoside N(3)-acetyltransferase VIII (286 aa).

The protein belongs to the antibiotic N-acetyltransferase family.

It carries out the reaction a 2-deoxystreptamine antibiotic + acetyl-CoA = an N(3)-acetyl-2-deoxystreptamine antibiotic + CoA + H(+). Functionally, resistance to neomycin. The protein is Aminoglycoside N(3)-acetyltransferase VIII (aacC8) of Streptomyces fradiae (Streptomyces roseoflavus).